A 129-amino-acid polypeptide reads, in one-letter code: Small ribosomal subunit protein uS11 (129 aa).

It belongs to the universal ribosomal protein uS11 family. In terms of assembly, part of the 30S ribosomal subunit. Interacts with proteins S7 and S18. Binds to IF-3.

In terms of biological role, located on the platform of the 30S subunit, it bridges several disparate RNA helices of the 16S rRNA. Forms part of the Shine-Dalgarno cleft in the 70S ribosome. The sequence is that of Small ribosomal subunit protein uS11 from Methylobacterium sp. (strain 4-46).